We begin with the raw amino-acid sequence, 61 residues long: Large ribosomal subunit protein uL30 (61 aa).

The protein belongs to the universal ribosomal protein uL30 family. As to quaternary structure, part of the 50S ribosomal subunit.

In Chromohalobacter salexigens (strain ATCC BAA-138 / DSM 3043 / CIP 106854 / NCIMB 13768 / 1H11), this protein is Large ribosomal subunit protein uL30.